Here is a 389-residue protein sequence, read N- to C-terminus: DNA damage checkpoint control protein RAD17 (389 aa).

Residues 358–389 (LAPPSAFPAEETQDPDESYHPAPSNTDIPLFL) form a disordered region. Residues 380 to 389 (PSNTDIPLFL) show a composition bias toward polar residues.

This sequence belongs to the rad1 family. In terms of assembly, component of the checkpoint clamp complex composed of DDC1, MEC3 and RAD17.

The protein resides in the nucleus. Component of the checkpoint clamp complex involved in the surveillance mechanism that allows the DNA repair pathways to act to restore the integrity of the DNA prior to DNA synthesis or separation of the replicated chromosomes. The chain is DNA damage checkpoint control protein RAD17 (RAD17) from Eremothecium gossypii (strain ATCC 10895 / CBS 109.51 / FGSC 9923 / NRRL Y-1056) (Yeast).